Here is a 260-residue protein sequence, read N- to C-terminus: Ribosomal RNA small subunit methyltransferase G (260 aa).

Residues Gly-94, Phe-99, 117 to 119 (DSS), 145 to 146 (AE), and Arg-164 contribute to the S-adenosyl-L-methionine site.

This sequence belongs to the methyltransferase superfamily. RNA methyltransferase RsmG family.

The protein resides in the cytoplasm. Functionally, specifically methylates the N7 position of a guanine in 16S rRNA. This is Ribosomal RNA small subunit methyltransferase G from Synechococcus sp. (strain JA-3-3Ab) (Cyanobacteria bacterium Yellowstone A-Prime).